A 112-amino-acid polypeptide reads, in one-letter code: Histone H2B (112 aa).

Residues 1–24 (MATPKSSSANRKKGGKKSHRKPKR) are disordered. Residues 10–24 (NRKKGGKKSHRKPKR) are compositionally biased toward basic residues.

It belongs to the histone H2B family. As to quaternary structure, the nucleosome is a histone octamer containing two molecules each of H2A, H2B, H3 and H4 assembled in one H3-H4 heterotetramer and two H2A-H2B heterodimers. The octamer wraps approximately 147 bp of DNA.

It localises to the nucleus. The protein localises to the chromosome. Its function is as follows. Core component of nucleosome. Nucleosomes wrap and compact DNA into chromatin, limiting DNA accessibility to the cellular machineries which require DNA as a template. Histones thereby play a central role in transcription regulation, DNA repair, DNA replication and chromosomal stability. DNA accessibility is regulated via a complex set of post-translational modifications of histones, also called histone code, and nucleosome remodeling. This is Histone H2B from Trypanosoma cruzi.